The chain runs to 193 residues: Dual-action ribosomal maturation protein DarP (193 aa).

It belongs to the DarP family.

The protein resides in the cytoplasm. Functionally, member of a network of 50S ribosomal subunit biogenesis factors which assembles along the 30S-50S interface, preventing incorrect 23S rRNA structures from forming. Promotes peptidyl transferase center (PTC) maturation. The polypeptide is Dual-action ribosomal maturation protein DarP (Vibrio cholerae serotype O1 (strain ATCC 39315 / El Tor Inaba N16961)).